We begin with the raw amino-acid sequence, 202 residues long: MSRYRGPRLRITRRLGDLPGLTRKAAKRSYPPGQHGQARRKRSEYAIRLEEKQKLRFNYGVSERQLVRYVKKARAQEGSTGTNLLKLLENRLDNVCFRIGFGPTVPGARQLVNHGHVTVNGRVTDIASYQCKAGDVIAIRERKCSKLLAEANLQFPGLANVPPHLELDKPKLSAKVIGRAEREWVALEINELLVVEYYSRKV.

Residues 15–42 (LGDLPGLTRKAAKRSYPPGQHGQARRKR) form a disordered region. The region spanning 90–152 (NRLDNVCFRI…KCSKLLAEAN (63 aa)) is the S4 RNA-binding domain.

Belongs to the universal ribosomal protein uS4 family. In terms of assembly, part of the 30S ribosomal subunit. Contacts protein S5. The interaction surface between S4 and S5 is involved in control of translational fidelity.

Its function is as follows. One of the primary rRNA binding proteins, it binds directly to 16S rRNA where it nucleates assembly of the body of the 30S subunit. With S5 and S12 plays an important role in translational accuracy. This chain is Small ribosomal subunit protein uS4, found in Synechococcus sp. (strain CC9311).